The sequence spans 354 residues: Probable L-ascorbate-6-phosphate lactonase UlaG (354 aa).

This sequence belongs to the UlaG family. The cofactor is a divalent metal cation.

The protein localises to the cytoplasm. It catalyses the reaction L-ascorbate 6-phosphate + H2O = 3-dehydro-L-gulonate 6-phosphate. Its pathway is cofactor degradation; L-ascorbate degradation; D-xylulose 5-phosphate from L-ascorbate: step 1/4. Its function is as follows. Probably catalyzes the hydrolysis of L-ascorbate-6-P into 3-keto-L-gulonate-6-P. Is essential for L-ascorbate utilization under anaerobic conditions. The protein is Probable L-ascorbate-6-phosphate lactonase UlaG of Salmonella gallinarum (strain 287/91 / NCTC 13346).